A 338-amino-acid polypeptide reads, in one-letter code: Nuclear hormone receptor family member nhr-52 (338 aa).

The segment at residues 1–75 (MKCLVCCSYA…IGMRFSEPKQ (75 aa)) is a DNA-binding region (nuclear receptor). NR C4-type zinc fingers lie at residues 3–23 (CLVC…CSAC) and 39–63 (CKYD…FKKC). The region spanning 98 to 337 (KDGVHYSNFL…KKLVNDIIIR (240 aa)) is the NR LBD domain.

This sequence belongs to the nuclear hormone receptor family.

It is found in the nucleus. Orphan nuclear receptor. The polypeptide is Nuclear hormone receptor family member nhr-52 (nhr-52) (Caenorhabditis elegans).